A 98-amino-acid polypeptide reads, in one-letter code: Large ribosomal subunit protein uL23 (98 aa).

It belongs to the universal ribosomal protein uL23 family. Part of the 50S ribosomal subunit. Contacts protein L29, and trigger factor when it is bound to the ribosome.

In terms of biological role, one of the early assembly proteins it binds 23S rRNA. One of the proteins that surrounds the polypeptide exit tunnel on the outside of the ribosome. Forms the main docking site for trigger factor binding to the ribosome. The protein is Large ribosomal subunit protein uL23 of Methylorubrum populi (strain ATCC BAA-705 / NCIMB 13946 / BJ001) (Methylobacterium populi).